The sequence spans 112 residues: Nitrogen regulatory protein P-II (112 aa).

The residue at position 51 (tyrosine 51) is an O-UMP-tyrosine.

This sequence belongs to the P(II) protein family. Homotrimer.

Its function is as follows. In nitrogen-limiting conditions, when the ratio of Gln to 2-ketoglutarate decreases, P-II is uridylylated to P-II-UMP. P-II-UMP allows the deadenylation of glutamine synthetase (GS), thus activating the enzyme. Conversely, in nitrogen excess P-II is deuridylated and promotes the adenylation of GS. P-II indirectly controls the transcription of the GS gene (glnA). P-II prevents NR-II-catalyzed conversion of NR-I to NR-I-phosphate, the transcriptional activator of glnA. When P-II is uridylylated to P-II-UMP, these events are reversed. The protein is Nitrogen regulatory protein P-II (glnB) of Azospirillum brasilense.